The primary structure comprises 389 residues: Probable family 17 glucosidase SCW10 (389 aa).

An N-terminal signal peptide occupies residues 1 to 18 (MRFSNFLTVSALLTGALG). Residues 19-29 (APAVRHKHEKR) constitute a propeptide that is removed on maturation. Residues 70–134 (ASQATTSTLE…SSASSSISAS (65 aa)) are disordered. N279 is a glycosylation site (N-linked (GlcNAc...) asparagine). The Nucleophile role is filled by E326.

Belongs to the glycosyl hydrolase 17 family. Post-translationally, glycosylated.

The protein localises to the secreted. It is found in the cell wall. Glucanases possibly play a role in cell expansion during growth, in cell-cell fusion during mating, and in spore release during sporulation. The chain is Probable family 17 glucosidase SCW10 (SCW10) from Saccharomyces cerevisiae (strain ATCC 204508 / S288c) (Baker's yeast).